Here is a 222-residue protein sequence, read N- to C-terminus: Pyrrolidone-carboxylate peptidase (222 aa).

Residues Glu80, Cys146, and His170 contribute to the active site.

Belongs to the peptidase C15 family. Homotetramer.

Its subcellular location is the cytoplasm. The catalysed reaction is Release of an N-terminal pyroglutamyl group from a polypeptide, the second amino acid generally not being Pro.. Its function is as follows. Removes 5-oxoproline from various penultimate amino acid residues except L-proline. The chain is Pyrrolidone-carboxylate peptidase from Mycobacterium tuberculosis (strain ATCC 25177 / H37Ra).